Reading from the N-terminus, the 136-residue chain is Large-conductance mechanosensitive channel (136 aa).

2 helical membrane passes run 10 to 30 (FAMRGNVVDLAVGVIIGAAFG) and 76 to 96 (GVFIQNVFDFLIVAFAIFMAI).

It belongs to the MscL family. Homopentamer.

It localises to the cell inner membrane. Channel that opens in response to stretch forces in the membrane lipid bilayer. May participate in the regulation of osmotic pressure changes within the cell. The sequence is that of Large-conductance mechanosensitive channel from Shigella boydii serotype 18 (strain CDC 3083-94 / BS512).